A 131-amino-acid chain; its full sequence is Small ribosomal subunit protein uS8 (131 aa).

Belongs to the universal ribosomal protein uS8 family. Part of the 30S ribosomal subunit. Contacts proteins S5 and S12.

Its function is as follows. One of the primary rRNA binding proteins, it binds directly to 16S rRNA central domain where it helps coordinate assembly of the platform of the 30S subunit. In Neorickettsia sennetsu (strain ATCC VR-367 / Miyayama) (Ehrlichia sennetsu), this protein is Small ribosomal subunit protein uS8.